The sequence spans 173 residues: Peptidyl-prolyl cis-trans isomerase cyp3 (173 aa).

The PPIase cyclophilin-type domain maps to 8–172 (FMDIAIDGRL…SNVAIVECGE (165 aa)).

Belongs to the cyclophilin-type PPIase family. PPIase H subfamily.

The protein localises to the cytoplasm. It localises to the cytoskeleton. The protein resides in the microtubule organizing center. It is found in the spindle pole body. The enzyme catalyses [protein]-peptidylproline (omega=180) = [protein]-peptidylproline (omega=0). PPIases accelerate the folding of proteins. It catalyzes the cis-trans isomerization of proline imidic peptide bonds in oligopeptides. This Schizosaccharomyces pombe (strain 972 / ATCC 24843) (Fission yeast) protein is Peptidyl-prolyl cis-trans isomerase cyp3 (cyp3).